Consider the following 122-residue polypeptide: Large ribosomal subunit protein uL14 (122 aa).

This sequence belongs to the universal ribosomal protein uL14 family. As to quaternary structure, part of the 50S ribosomal subunit. Forms a cluster with proteins L3 and L19. In the 70S ribosome, L14 and L19 interact and together make contacts with the 16S rRNA in bridges B5 and B8.

In terms of biological role, binds to 23S rRNA. Forms part of two intersubunit bridges in the 70S ribosome. This is Large ribosomal subunit protein uL14 from Borrelia hermsii (strain HS1 / DAH).